Here is a 189-residue protein sequence, read N- to C-terminus: Interferon alpha-F (189 aa).

A signal peptide spans 1–23 (MAPAWSLLLALLLLSCNAICSLG). 2 cysteine pairs are disulfide-bonded: Cys24–Cys122 and Cys52–Cys162.

It belongs to the alpha/beta interferon family.

The protein localises to the secreted. Functionally, produced by macrophages, IFN-alpha have antiviral activities. Interferon stimulates the production of two enzymes: a protein kinase and an oligoadenylate synthetase. This chain is Interferon alpha-F (IFNAF), found in Bos taurus (Bovine).